The following is a 252-amino-acid chain: Imidazole glycerol phosphate synthase subunit HisF (252 aa).

Catalysis depends on residues D11 and D130.

The protein belongs to the HisA/HisF family. As to quaternary structure, heterodimer of HisH and HisF.

The protein resides in the cytoplasm. The catalysed reaction is 5-[(5-phospho-1-deoxy-D-ribulos-1-ylimino)methylamino]-1-(5-phospho-beta-D-ribosyl)imidazole-4-carboxamide + L-glutamine = D-erythro-1-(imidazol-4-yl)glycerol 3-phosphate + 5-amino-1-(5-phospho-beta-D-ribosyl)imidazole-4-carboxamide + L-glutamate + H(+). It participates in amino-acid biosynthesis; L-histidine biosynthesis; L-histidine from 5-phospho-alpha-D-ribose 1-diphosphate: step 5/9. Functionally, IGPS catalyzes the conversion of PRFAR and glutamine to IGP, AICAR and glutamate. The HisF subunit catalyzes the cyclization activity that produces IGP and AICAR from PRFAR using the ammonia provided by the HisH subunit. The sequence is that of Imidazole glycerol phosphate synthase subunit HisF from Bacillus cereus (strain AH820).